Consider the following 161-residue polypeptide: Nucleotide-binding protein Swoo_3646 (161 aa).

Belongs to the YajQ family.

Its function is as follows. Nucleotide-binding protein. This chain is Nucleotide-binding protein Swoo_3646, found in Shewanella woodyi (strain ATCC 51908 / MS32).